The following is a 607-amino-acid chain: Cyclic-di-GMP receptor FimW (607 aa).

The segment at 323-492 (ERTFQRTQGQ…GGTQMGIEMI (170 aa)) is pilZ-like domain. Positions 324–328 (RTFQR) match the RXXXR motif motif. The D/NXSXXG motif motif lies at 435–440 (NHSPGG). Polar residues predominate over residues 568 to 582 (SQFEYRSAEPVNTPS). Residues 568–607 (SQFEYRSAEPVNTPSDKPVTAPVARPPAGEEDFDSLWKSL) are disordered.

As to quaternary structure, monomer in the absence of c-di-GMP. Forms dimers in the presence of c-di-GMP.

It is found in the cytoplasm. Functionally, high-affinity cyclic-di-GMP binding protein that regulates type IV pili (T4P) elongation. Required for T4P-mediated surface attachment and walking motility during the early phases of surface colonization. Not required for twitching motility. Does not bind related nucleotides such as GMP, GDP, GTP or ATP. This chain is Cyclic-di-GMP receptor FimW, found in Pseudomonas aeruginosa (strain ATCC 15692 / DSM 22644 / CIP 104116 / JCM 14847 / LMG 12228 / 1C / PRS 101 / PAO1).